The sequence spans 198 residues: Recombination protein RecR (198 aa).

The C4-type zinc-finger motif lies at 57 to 72 (CSVCGNLTDEDPCAIC). One can recognise a Toprim domain in the interval 80 to 175 (STILIVEDSR…KVTRLARGLA (96 aa)).

This sequence belongs to the RecR family.

Its function is as follows. May play a role in DNA repair. It seems to be involved in an RecBC-independent recombinational process of DNA repair. It may act with RecF and RecO. The chain is Recombination protein RecR from Streptococcus sanguinis (strain SK36).